The chain runs to 185 residues: Signal peptidase complex subunit 3 (185 aa).

Residues 1–12 (MIVDTFTNRGST) are Cytoplasmic-facing. A helical; Signal-anchor for type II membrane protein membrane pass occupies residues 13-34 (FFSKLSTVLFFLCAVITFQGVI). Residues 35-185 (QRREVELDTP…PFHKIITQPK (151 aa)) are Lumenal-facing. An N-linked (GlcNAc...) asparagine glycan is attached at N148.

This sequence belongs to the SPCS3 family. As to quaternary structure, component of the signal peptidase complex (SPC) composed of a catalytic subunit sec11 and three accessory subunits spc1, spc2 and spc3. The complex induces a local thinning of the ER membrane which is used to measure the length of the signal peptide (SP) h-region of protein substrates. This ensures the selectivity of the complex towards h-regions shorter than 18-20 amino acids. SPC associates with the translocon complex.

The protein localises to the endoplasmic reticulum membrane. Essential component of the signal peptidase complex (SPC) which catalyzes the cleavage of N-terminal signal sequences from nascent proteins as they are translocated into the lumen of the endoplasmic reticulum. Essential for the SPC catalytic activity, possibly by stabilizing and positioning the active center of the complex close to the lumenal surface. Essential for viability. The sequence is that of Signal peptidase complex subunit 3 (spc3) from Schizosaccharomyces pombe (strain 972 / ATCC 24843) (Fission yeast).